A 609-amino-acid polypeptide reads, in one-letter code: ATP-dependent lipid A-core flippase (609 aa).

The next 6 helical transmembrane spans lie at 47–67, 88–108, 167–187, 190–210, 279–299, and 305–325; these read LLAA…IYLI, ILML…VGSF, AIIT…VMFV, WQLS…ISII, VIQI…AIFG, and GSSW…AAIL. The 294-residue stretch at 47-340 folds into the ABC transmembrane type-1 domain; the sequence is LLAAIGSIFF…LTKVNVVIQK (294 aa). The ABC transporter domain maps to 372-606; sequence VTIKDLSFAF…GGLYTRLYQS (235 aa). Position 404–411 (404–411) interacts with ATP; sequence GKSGSGKT.

The protein belongs to the ABC transporter superfamily. Lipid exporter (TC 3.A.1.106) family. As to quaternary structure, homodimer.

The protein resides in the cell inner membrane. It carries out the reaction ATP + H2O + lipid A-core oligosaccharideSide 1 = ADP + phosphate + lipid A-core oligosaccharideSide 2.. Its function is as follows. Involved in lipopolysaccharide (LPS) biosynthesis. Translocates lipid A-core from the inner to the outer leaflet of the inner membrane. Transmembrane domains (TMD) form a pore in the inner membrane and the ATP-binding domain (NBD) is responsible for energy generation. The chain is ATP-dependent lipid A-core flippase from Francisella tularensis subsp. holarctica (strain LVS).